The chain runs to 256 residues: Undecaprenyl-diphosphatase (256 aa).

The next 8 membrane-spanning stretches (helical) occupy residues 5 to 25, 41 to 61, 74 to 94, 100 to 120, 135 to 155, 180 to 200, 208 to 228, and 234 to 254; these read IIEI…PISS, NSLM…VFYF, LLSL…VISS, LLEN…IILY, LNFK…IPGV, FLLA…NAIG, LVLI…KFFL, and FSLN…FIII.

Belongs to the UppP family.

The protein localises to the cell inner membrane. The catalysed reaction is di-trans,octa-cis-undecaprenyl diphosphate + H2O = di-trans,octa-cis-undecaprenyl phosphate + phosphate + H(+). In terms of biological role, catalyzes the dephosphorylation of undecaprenyl diphosphate (UPP). Confers resistance to bacitracin. This is Undecaprenyl-diphosphatase from Pelagibacter ubique (strain HTCC1062).